The primary structure comprises 203 residues: ATP-dependent Clp protease proteolytic subunit (203 aa).

Residue serine 107 is the Nucleophile of the active site. Residue histidine 132 is part of the active site.

It belongs to the peptidase S14 family. As to quaternary structure, fourteen ClpP subunits assemble into 2 heptameric rings which stack back to back to give a disk-like structure with a central cavity, resembling the structure of eukaryotic proteasomes.

The protein resides in the cytoplasm. The catalysed reaction is Hydrolysis of proteins to small peptides in the presence of ATP and magnesium. alpha-casein is the usual test substrate. In the absence of ATP, only oligopeptides shorter than five residues are hydrolyzed (such as succinyl-Leu-Tyr-|-NHMec, and Leu-Tyr-Leu-|-Tyr-Trp, in which cleavage of the -Tyr-|-Leu- and -Tyr-|-Trp bonds also occurs).. Its function is as follows. Cleaves peptides in various proteins in a process that requires ATP hydrolysis. Has a chymotrypsin-like activity. Plays a major role in the degradation of misfolded proteins. The protein is ATP-dependent Clp protease proteolytic subunit of Pelagibacter ubique (strain HTCC1062).